Consider the following 143-residue polypeptide: Transcriptional regulator SlyA (143 aa).

The 134-residue stretch at 2–135 folds into the HTH marR-type domain; sequence ESTLGSDLAR…LSGLIDKLEK (134 aa). A DNA-binding region (H-T-H motif) is located at residues 49-72; the sequence is QIQLAKAIGIEQPSLVRTLDQLEE.

It belongs to the SlyA family. Homodimer.

Functionally, transcription regulator that can specifically activate or repress expression of target genes. The polypeptide is Transcriptional regulator SlyA (Yersinia pestis (strain Pestoides F)).